Reading from the N-terminus, the 944-residue chain is MGPKTLPQLAGKWQVLCMLSLCCWGWVSGQLRYSVVEESEPGTLVGNVAQDLGLKMTDLLSRRLQLGSEENGRYFSLSLMSGALAVNQKIDRESLCGASTSCLLPVQVVTEHPLELIRVEVEILDLNDNSPSFATPEREMRISESAASGARFPLDSAQDPDVGTNTVSFYTLSPNSHFSLNVKTLKDGKPFPELVLEQQLDREAQARHQLVLTAVDGGTPARSGTTLISVIVLDINDNAPTFQSSVLRVGIPENAPIGTLLLRLNATDPDEGTNGQLDYSFGDHTSEAVRNLFGLDPSSGAIHVLGPIDFEESRFYEIHARARDQGQPAMEGHCVIQVDVGDVNDNAPEVLLASLANPVLESTPVGTVVGLFNVRDRDSGRNGEVSLDISPDLPFQIKPSENHYSLLTSQPLDREATSHYIIELLASDAGSPSLHKHLTIRLNISDVNDNAPRFNQQLYTAYILENRPPGSLLCTVAASDPDTGDNARLTYSIVGNQVQGAPASSFVYVNPEDGRIFAQRTFDYELLQMLQIVVGVRDSGSPPLHANTSLHVFVLDENDNAPAVLHPRPDWEHSAPQRLPRSAPPGSLVTKVTAVDADAGHNAWLSYSLLPQSTAPGLFLVSTHTGEVRTARALLEDDSDTQQVVVLVRDNGDPSLSSTATVLLVLEDEDPEEMPKSSDFLIHPPERSDLTLYLIVALATVSLLSLVTFTFLSAKCLQGNADGDGGGGQCCRRQDSPSPDFYKQSSPNLQVSSDGTLKYMEVTLRPTDSQSHCYRTCFSPASDGSDFTFLRPLSVQQPTALALEPDAIRSRSNTLRERSQQAPPNTDWRFSQAQRPGTSGSQNGDDTGTWPNNQFDTEMLQAMILASASEAADGSSTLGGGAGTMGLSARYGPQFTLQHVPDYRQNVYIPGSNATLTNAAGKRDGKAPAGGNGNKKKSGKKEKK.

Residues 1 to 29 form the signal peptide; it reads MGPKTLPQLAGKWQVLCMLSLCCWGWVSG. Cadherin domains follow at residues 30–133, 134–242, 243–350, 351–454, 455–564, and 571–677; these read QLRY…SPSF, ATPE…APTF, QSSV…APEV, LLAS…APRF, NQQL…APAV, and WEHS…MPKS. Over 30–693 the chain is Extracellular; it reads QLRYSVVEES…PPERSDLTLY (664 aa). N-linked (GlcNAc...) asparagine glycans are attached at residues N265, N443, and N547. A helical transmembrane segment spans residues 694-714; it reads LIVALATVSLLSLVTFTFLSA. Over 715–944 the chain is Cytoplasmic; it reads KCLQGNADGD…KKKSGKKEKK (230 aa). Disordered stretches follow at residues 722 to 747, 812 to 853, and 914 to 944; these read DGDG…QSSP, SNTL…WPNN, and ATLT…KEKK. Polar residues predominate over residues 820–853; the sequence is QQAPPNTDWRFSQAQRPGTSGSQNGDDTGTWPNN. Basic residues predominate over residues 934–944; that stretch reads NKKKSGKKEKK.

It is found in the cell membrane. Potential calcium-dependent cell-adhesion protein. May be involved in the establishment and maintenance of specific neuronal connections in the brain. In Homo sapiens (Human), this protein is Protocadherin gamma-C5 (PCDHGC5).